We begin with the raw amino-acid sequence, 146 residues long: Transcriptional regulator MraZ (146 aa).

2 consecutive SpoVT-AbrB domains span residues 7–54 (NATN…GLDL) and 83–126 (GVFV…QPEA).

This sequence belongs to the MraZ family. Forms oligomers.

It is found in the cytoplasm. The protein resides in the nucleoid. The sequence is that of Transcriptional regulator MraZ from Rhizobium rhizogenes (strain K84 / ATCC BAA-868) (Agrobacterium radiobacter).